We begin with the raw amino-acid sequence, 152 residues long: Ribosome maturation factor RimP (152 aa).

Belongs to the RimP family.

The protein localises to the cytoplasm. In terms of biological role, required for maturation of 30S ribosomal subunits. The polypeptide is Ribosome maturation factor RimP (Rubrobacter xylanophilus (strain DSM 9941 / JCM 11954 / NBRC 16129 / PRD-1)).